A 229-amino-acid chain; its full sequence is Ribonuclease 3 (229 aa).

One can recognise an RNase III domain in the interval 5-127; the sequence is LSRLERKLGH…LIGAIYLDAG (123 aa). E40 contributes to the Mg(2+) binding site. The active site involves D44. Mg(2+) contacts are provided by D113 and E116. Residue E116 is part of the active site. One can recognise a DRBM domain in the interval 154 to 224; it reads DPKTRLQEFL…AAAALIALGV (71 aa).

The protein belongs to the ribonuclease III family. Homodimer. The cofactor is Mg(2+).

It is found in the cytoplasm. It carries out the reaction Endonucleolytic cleavage to 5'-phosphomonoester.. In terms of biological role, digests double-stranded RNA. Involved in the processing of primary rRNA transcript to yield the immediate precursors to the large and small rRNAs (23S and 16S). Processes some mRNAs, and tRNAs when they are encoded in the rRNA operon. Processes pre-crRNA and tracrRNA of type II CRISPR loci if present in the organism. The chain is Ribonuclease 3 from Ectopseudomonas mendocina (strain ymp) (Pseudomonas mendocina).